A 370-amino-acid chain; its full sequence is Tyrosine-protein kinase transforming protein SEA (370 aa).

The Protein kinase domain maps to T60 to L323. ATP-binding positions include I66–V74 and K92. D186 acts as the Proton acceptor in catalysis. A Phosphotyrosine; by autocatalysis modification is found at Y216. The disordered stretch occupies residues P345–E370. Residues D357–E370 show a composition bias toward acidic residues.

This sequence belongs to the protein kinase superfamily. Tyr protein kinase family.

The catalysed reaction is L-tyrosyl-[protein] + ATP = O-phospho-L-tyrosyl-[protein] + ADP + H(+). The polypeptide is Tyrosine-protein kinase transforming protein SEA (V-SEA) (Galliformes).